A 177-amino-acid chain; its full sequence is Negative modulator of initiation of replication (177 aa).

It belongs to the SeqA family. As to quaternary structure, homodimer. Polymerizes to form helical filaments.

It localises to the cytoplasm. Its function is as follows. Negative regulator of replication initiation, which contributes to regulation of DNA replication and ensures that replication initiation occurs exactly once per chromosome per cell cycle. Binds to pairs of hemimethylated GATC sequences in the oriC region, thus preventing assembly of replication proteins and re-initiation at newly replicated origins. Repression is relieved when the region becomes fully methylated. This Vibrio cholerae serotype O1 (strain ATCC 39315 / El Tor Inaba N16961) protein is Negative modulator of initiation of replication.